The sequence spans 468 residues: Inositol polyphosphate 5-phosphatase K (468 aa).

The interval 34 to 337 is catalytic; it reads VHVVTWNVAS…SDHKPVTGTF (304 aa). The tract at residues 318–448 is required for interaction with GPR78 and PAK1; the sequence is NYVSHMAYSI…HSVVGISQPF (131 aa). A required for ruffle localization region spans residues 340-468; sequence ELNPLMSVPL…DTLYEPEPQI (129 aa).

This sequence belongs to the inositol 1,4,5-trisphosphate 5-phosphatase type II family. As to quaternary structure, interacts with GPR78; necessary for INPP5K localization at the endoplasmic reticulum. Interacts with PAK1; competes with GPR78. As to expression, expressed in the skeletal muscle and the eye.

It localises to the endoplasmic reticulum. The protein resides in the cytoplasm. It catalyses the reaction 1D-myo-inositol 1,4,5-trisphosphate + H2O = 1D-myo-inositol 1,4-bisphosphate + phosphate. The enzyme catalyses 1,2-dioctanoyl-sn-glycero-3-phospho-(1D-myo-inositol-3,4,5-trisphosphate) + H2O = 1,2-dioctanoyl-sn-glycero-3-phospho-(1D-myo-inositol-3,4-bisphosphate) + phosphate. The catalysed reaction is 1D-myo-inositol 1,3,4,5-tetrakisphosphate + H2O = 1D-myo-inositol 1,3,4-trisphosphate + phosphate. It carries out the reaction a 1,2-diacyl-sn-glycero-3-phospho-(1D-myo-inositol-4,5-bisphosphate) + H2O = a 1,2-diacyl-sn-glycero-3-phospho-(1D-myo-inositol 4-phosphate) + phosphate. It catalyses the reaction a 1,2-diacyl-sn-glycero-3-phospho-(1D-myo-inositol-3,4,5-trisphosphate) + H2O = a 1,2-diacyl-sn-glycero-3-phospho-(1D-myo-inositol-3,4-bisphosphate) + phosphate. Its function is as follows. Inositol 5-phosphatase which acts on inositol 1,4,5-trisphosphate, inositol 1,3,4,5-tetrakisphosphate, phosphatidylinositol 4,5-bisphosphate and phosphatidylinositol 3,4,5-trisphosphate. Has 6-fold higher affinity for phosphatidylinositol 4,5-bisphosphate than for inositol 1,4,5-trisphosphate. Negatively regulates assembly of the actin cytoskeleton. Controls insulin-dependent glucose uptake among inositol 3,4,5-trisphosphate phosphatases; therefore, is the specific regulator for insulin signaling in skeletal muscle. The sequence is that of Inositol polyphosphate 5-phosphatase K from Mus musculus (Mouse).